The chain runs to 257 residues: Probable transcriptional regulatory protein SRU_2667 (257 aa).

The segment covering 1–15 has biased composition (basic residues); it reads MAGHTRKWAKVKRKK. Positions 1–25 are disordered; that stretch reads MAGHTRKWAKVKRKKQKDDRRKSKV.

Belongs to the TACO1 family.

The protein resides in the cytoplasm. The protein is Probable transcriptional regulatory protein SRU_2667 of Salinibacter ruber (strain DSM 13855 / M31).